A 183-amino-acid polypeptide reads, in one-letter code: ATP-dependent protease subunit HslV (183 aa).

T2 is an active-site residue. Na(+)-binding residues include G157, C160, and T163.

This sequence belongs to the peptidase T1B family. HslV subfamily. In terms of assembly, a double ring-shaped homohexamer of HslV is capped on each side by a ring-shaped HslU homohexamer. The assembly of the HslU/HslV complex is dependent on binding of ATP.

The protein resides in the cytoplasm. It carries out the reaction ATP-dependent cleavage of peptide bonds with broad specificity.. Its activity is regulated as follows. Allosterically activated by HslU binding. In terms of biological role, protease subunit of a proteasome-like degradation complex believed to be a general protein degrading machinery. This chain is ATP-dependent protease subunit HslV, found in Vibrio parahaemolyticus serotype O3:K6 (strain RIMD 2210633).